Here is a 1290-residue protein sequence, read N- to C-terminus: MTRKTRYLHQITTLILGGLLIVPAAAPPVSADIAATHVYHNHMPNFWAYYDLNTYNSTPVGSPIRYTYDGEVIQLKQNPPAGYPYYLPNGSPMPHDDLVSYYSHHAKTGAYLTWPWSVANTLHSSHPQAQMHVTMSGSVVNNVNSIIQQGNVSGYNNPAWGTPWKNAVTQLKTAGGDNRLDLIHFSGHHSMGPLVGNDYLLKDMIYHGATMAQPYFLGSSYKSSKGFFPTELGFSERIIPVLNKLGIQWSVIGNNHFSRTLKDYPLLDSPGTDTMISPPNRSDLQNVSTAGAWVNEPMFNEQQVVYNKYPFASTAHWVRYVDPATGAESRVVGVPVAQAQSWEEGYLGQVKADALKPYENLVAQKQIFVVAHDGDNSSGRAGSEETWRNAGNVTYADSGVTGMGIDEYLRSNTPAAADVVHVQDGSWIDTRDSSSDPAWYHWHLPFGIWKGQFAAFNQVNGTAYAPKKNLAGVEEGMTVSFEKGYHYLERNFALLQASLNYAKTAEQIWLEEHPNYWKPANPLDREVTYEGNQLNPWMLSYPVKGNPANDYAGGANPAELAWYFLLPAMDSGFGYYDENVDDSVKPALSFNQSLYFSKPYVSQKLAKDKTGPSVWWPQRYPYNPGSANVSKAEGWTLQHYNNAFAIYTYAFDTSGISEIKVKVRAHRDKTADAADNTFKVYDPAGLAAAGIANIDPAKVGAWTEYPMNVRDLSADINGVDWQPSSMTIMQKVPATDIGNLYFSYISDYRDQLLDYFIEAKDAKGNVTQSDIQQVYVGAGKYKLANGKYTESMQGTIEGTHPFITDVPAVPDTEAPAVPANLQATVMNASSVGLSWNAATDNIRVTGYEIYRNGVRIGTTPSTSYTDSGLSASTAYEYRVKAYDASGNLSGFSAAATATTPAGNHVTVYYKQGYSTPYIHYRPAGGTWTTAPGVAIPAAEVAGYNKITINIGAATQLEACFNNGSGTWDSNGGSNYLFGTGTWTYTPTGKIQAGAPVAPSATPTVAPTATPTPKPSVTPTVTPITTPTVAPTLSPTPTVAPTVKPSATPIATPTVTPTVSPTATPTVVPTIAPTATPTTSPSATPVPTATPAGNSATIYYKNTAFSNSYIHYKLDGATAWTTSPGVQMQASTFSGYKAITIPLGSATGLTAAFNNGSGIWDNNGGSNYHFGTGSSSLTGGNLITGEPQADSVTFRVSVPGSTPANAPVYLTGSFNSWNAADPAYLLTRGSDGIYSITLNLPAGSAVTYKLTRGSWATVETASSGADITNRTLTPAGGAQTVTLTVQRWKDQ.

A signal peptide spans 1–31; that stretch reads MTRKTRYLHQITTLILGGLLIVPAAAPPVSA. Catalysis depends on glutamate 231, which acts as the Nucleophile. Aspartate 373 functions as the Proton donor in the catalytic mechanism. The 86-residue stretch at 817 to 902 folds into the Fibronectin type-III domain; the sequence is VPANLQATVM…AAATATTPAG (86 aa). Residues 902-978 form a CBM25 region; that stretch reads GNHVTVYYKQ…SNGGSNYLFG (77 aa). Low complexity-rich tracts occupy residues 994 to 1008 and 1016 to 1031; these read APVA…APTA and VTPT…VAPT. Residues 994 to 1037 form a disordered region; the sequence is APVAPSATPTVAPTATPTPKPSVTPTVTPITTPTVAPTLSPTPT. The CBM25 stretch occupies residues 1092 to 1171; sequence GNSATIYYKN…NGGSNYHFGT (80 aa). The CBM20 domain occupies 1183–1289; sequence TGEPQADSVT…VTLTVQRWKD (107 aa).

The protein belongs to the glycosyl hydrolase 119 (GH119) family.

The protein localises to the secreted. It carries out the reaction Endohydrolysis of (1-&gt;4)-alpha-D-glucosidic linkages in polysaccharides containing three or more (1-&gt;4)-alpha-linked D-glucose units.. In terms of biological role, acts on maltooligosaccharides that have a degree of polymerization (DP) of 4 or more, amylose, and soluble or raw starch to produce glucose and maltooligosaccharides up to DP5 by a hydrolysis reaction. Also acts on maltooligosyl trehaloses that have DP5 or more to produce trehalose as the major hydrolysis product. The protein is Alpha-amylase of Niallia circulans (Bacillus circulans).